The primary structure comprises 350 residues: C5a anaphylatoxin chemotactic receptor 1 (350 aa).

Topologically, residues 1 to 37 (MDDMCSILTEEELSLYNITDCEFVKPGGLGPVLGPRH) are extracellular. A glycan (N-linked (GlcNAc...) asparagine) is linked at Asn17. The chain crosses the membrane as a helical span at residues 38 to 64 (LSALVFYGLVFLLGVPGNALVVWVTGF). Residues 65 to 69 (RMPRS) are Cytoplasmic-facing. Residues 70 to 93 (VTSLWFLNLALADLLCCLSLPLLM) traverse the membrane as a helical segment. The Extracellular portion of the chain corresponds to 94–110 (VPLAMDQHWPFGPVACK). A disulfide bridge connects residues Cys109 and Cys187. A helical membrane pass occupies residues 111-132 (LLKGLLYLIMFCSVLLLVLISL). At 133-154 (DRFLLVSWPVWCQNWRRPRKAG) the chain is on the cytoplasmic side. A helical membrane pass occupies residues 155–174 (WVCVGVWLLALLGSIPQFVY). The Extracellular portion of the chain corresponds to 175–197 (VKEVQLSTSKSECLGLYTVASAW). Residues 198-223 (ANTTARFLVGFVLPFITIVTCHWVVY) form a helical membrane-spanning segment. Residues 224-247 (SRARRGSGVGPGRVSEARSRRTLR) are Cytoplasmic-facing. A helical membrane pass occupies residues 248–270 (VIVAVSLSFFLCWFPLHILDFLV). Over 271-287 (LSTPRHSSHSANIQLAH) the chain is Extracellular. Residues 288-308 (TLALCLAYCNSCLNPLLYVCL) form a helical membrane-spanning segment. Residues 309 to 350 (GRGFKQNINRSLRNMFNFATEESVTRQSMFKSTSERTQEMNM) lie on the Cytoplasmic side of the membrane.

This sequence belongs to the G-protein coupled receptor 1 family. As to expression, high expression in head, kidney and posterior kidney, lower levels in peripheral blood leukocytes and spleen, low expression in brain and gills, heart, intestine and very low expression in liver and muscle.

It is found in the cell membrane. Its function is as follows. Receptor for the chemotactic and inflammatory peptide anaphylatoxin C5a. This receptor stimulates chemotaxis, granule enzyme release and superoxide anion production. In Oncorhynchus mykiss (Rainbow trout), this protein is C5a anaphylatoxin chemotactic receptor 1 (c5ar1).